The following is a 298-amino-acid chain: Acidic endochitinase (298 aa).

The first 29 residues, 1-29 (MKPNMACLKQVSALLLPLLFISFFKPSHA), serve as a signal peptide directing secretion. One can recognise a GH18 domain in the interval 30-298 (GGISVYWGQN…GYSGAIIGSV (269 aa)). Cystine bridges form between C49/C96 and C79/C86. The active-site Proton donor is the E156. An intrachain disulfide couples C185 to C214.

Belongs to the glycosyl hydrolase 18 family. Chitinase class II subfamily.

Its subcellular location is the secreted. It is found in the extracellular space. The enzyme catalyses Random endo-hydrolysis of N-acetyl-beta-D-glucosaminide (1-&gt;4)-beta-linkages in chitin and chitodextrins.. Its function is as follows. This protein functions as a defense against chitin containing fungal pathogens. The chain is Acidic endochitinase from Phaseolus angularis (Azuki bean).